The following is a 708-amino-acid chain: ARF GTPase-activating protein GIT2 (708 aa).

Residues 1–124 (MSKRLRSSDV…AFVHRLPCRE (124 aa)) form the Arf-GAP domain. The segment at 11-34 (CADCNGPDPSWASVNRGTFICDEC) adopts a C4-type zinc-finger fold. ANK repeat units lie at residues 132–161 (DLSKQLHSSVRTGNLETCLRLLSLGAQANF), 166–195 (KGSTPLHVASKAGQILQAELLAVYGADPGT), and 199–228 (SGKTPVDYARQGGHHELAERLIEIQYELTD). Residues 376–592 (STQHSTESQD…SPTLPSTEDV (217 aa)) form a disordered region. A compositionally biased stretch (acidic residues) spans 384–401 (QDNDQPDYDSVASDEDTD). A phosphoserine mark is found at Ser-393 and Ser-396. Residue Thr-400 is modified to Phosphothreonine. Residues 407 to 438 (SKANRQKLQTLQSENSSLRRQATASACQVQTG) show a composition bias toward polar residues. Over residues 504–518 (TSSSSLPSFPSTLSW) the composition is skewed to low complexity. A phosphoserine mark is found at Ser-508, Ser-511, and Ser-519. The segment covering 519–532 (SRDESARRASRLEK) has biased composition (basic and acidic residues). Thr-536 bears the Phosphothreonine mark. Ser-563 carries the phosphoserine modification.

As to quaternary structure, may form heterooligomers with GIT1. Directly interacts with protein Piccolo/PCLO. Interacts with PPFIA1 and PPFIA2. Interacts with ARHGEF7. Identified in a complex with ARHGEF6 and BIN2. Interacts with PAK3. Interacts with PXN/paxillin. Interacts with TGFB1I1. Forms a complex with EFNB1 and GRB4/NCK2. In terms of processing, tyrosine phosphorylated when coexpressed in cells with PTK2/FAK1 and SRC. Expressed in the brain (at protein level).

Functionally, GTPase-activating protein for ADP ribosylation factor family members, including ARF1. The protein is ARF GTPase-activating protein GIT2 (Git2) of Mus musculus (Mouse).